The primary structure comprises 778 residues: Exo-beta-D-glucosaminidase (778 aa).

Residues Y55, 104-105, 180-181, E308, E349, and Y381 contribute to the substrate site; these read GE and DE. Catalysis depends on E181, which acts as the Proton donor. The active-site Nucleophile is E349.

This sequence belongs to the glycosyl hydrolase 35 family. Homodimer.

It localises to the cytoplasm. It catalyses the reaction beta-D-glucosaminyl-(1-&gt;4)-N-acetyl-D-glucosamine + H2O = D-glucosamine + N-acetyl-D-glucosamine. It functions in the pathway glycan degradation; chitin degradation. Exo-type enzyme that specifically cleaves the non-reducing terminal glycosidic bond of chitooligosaccharides. Catalyzes the hydrolysis of GlcN-GlcNAc to glucosamine (GlcN) and N-acetylglucosamine (GlcNAc). Involved in chitin degradation. Can also hydrolyze chitosan and chitooligosaccharides of various chain lengths. The chain is Exo-beta-D-glucosaminidase from Pyrococcus horikoshii (strain ATCC 700860 / DSM 12428 / JCM 9974 / NBRC 100139 / OT-3).